The chain runs to 168 residues: uncharacterized protein (168 aa).

Basic and acidic residues predominate over residues 1–15 (MKEASDREEAPKMVE). The segment at 1-36 (MKEASDREEAPKMVEKNYSTGFRKAHGEKDQSVTKP) is disordered.

The protein resides in the cytoplasm. This is an uncharacterized protein from Saccharomyces cerevisiae (strain ATCC 204508 / S288c) (Baker's yeast).